A 257-amino-acid polypeptide reads, in one-letter code: Imidazole glycerol phosphate synthase subunit HisF (257 aa).

Residues Asp-11 and Asp-130 contribute to the active site.

Belongs to the HisA/HisF family. In terms of assembly, heterodimer of HisH and HisF.

The protein localises to the cytoplasm. It catalyses the reaction 5-[(5-phospho-1-deoxy-D-ribulos-1-ylimino)methylamino]-1-(5-phospho-beta-D-ribosyl)imidazole-4-carboxamide + L-glutamine = D-erythro-1-(imidazol-4-yl)glycerol 3-phosphate + 5-amino-1-(5-phospho-beta-D-ribosyl)imidazole-4-carboxamide + L-glutamate + H(+). The protein operates within amino-acid biosynthesis; L-histidine biosynthesis; L-histidine from 5-phospho-alpha-D-ribose 1-diphosphate: step 5/9. Its function is as follows. IGPS catalyzes the conversion of PRFAR and glutamine to IGP, AICAR and glutamate. The HisF subunit catalyzes the cyclization activity that produces IGP and AICAR from PRFAR using the ammonia provided by the HisH subunit. In Aeromonas salmonicida (strain A449), this protein is Imidazole glycerol phosphate synthase subunit HisF.